The chain runs to 379 residues: Cytoplasmic tRNA 2-thiolation protein 1 (379 aa).

This sequence belongs to the TtcA family. CTU1/NCS6/ATPBD3 subfamily.

Its subcellular location is the cytoplasm. It participates in tRNA modification; 5-methoxycarbonylmethyl-2-thiouridine-tRNA biosynthesis. Plays a central role in 2-thiolation of mcm(5)S(2)U at tRNA wobble positions of tRNA(Lys), tRNA(Glu) and tRNA(Gln). Directly binds tRNAs and probably acts by catalyzing adenylation of tRNAs, an intermediate required for 2-thiolation. It is unclear whether it acts as a sulfurtransferase that transfers sulfur from thiocarboxylated URM1 onto the uridine of tRNAs at wobble position. Prior mcm(5) tRNA modification by the elongator complex is required for 2-thiolation. May also be involved in protein urmylation. This Lodderomyces elongisporus (strain ATCC 11503 / CBS 2605 / JCM 1781 / NBRC 1676 / NRRL YB-4239) (Yeast) protein is Cytoplasmic tRNA 2-thiolation protein 1.